The sequence spans 533 residues: Zinc finger protein 692 (533 aa).

Disordered regions lie at residues 124–251 and 290–310; these read SLIP…PATL and TESL…TCDE. Residues 149-178 show a composition bias toward basic and acidic residues; sequence EARRKQEAEGLECEHRERTQETRLSRRVEP. Acidic residues predominate over residues 190–208; it reads QVVEEEEEEEEEEEEEELL. Residue Ser-233 is modified to Phosphoserine. Over residues 290–305 the composition is skewed to polar residues; that stretch reads TESLDSPGSQAQSAPN. 5 consecutive C2H2-type zinc fingers follow at residues 329 to 354, 360 to 384, 390 to 412, 418 to 440, and 449 to 472; these read MPCD…KYQH, FCCP…VKLH, YICE…RRIH, LQCE…RRKH, and FPCE…SKSH. Phosphoserine is present on Ser-471. The interval 478-533 is disordered; it reads VQESPGSLGSSPSISAPEPLQSPEGTSFSTSYDSNPAPSTSISSPGVPAPRNTEKS. Positions 481–492 are enriched in low complexity; it reads SPGSLGSSPSIS. The segment covering 500 to 521 has biased composition (polar residues); it reads PEGTSFSTSYDSNPAPSTSISS.

It belongs to the krueppel C2H2-type zinc-finger protein family. Phosphorylation at Ser-471 results in loss of DNA-binding activity.

It localises to the nucleus. Its function is as follows. May act as an transcriptional repressor for PCK1 gene expression, in turns may participate in the hepatic gluconeogenesis regulation through the activated AMPK signaling pathway. The sequence is that of Zinc finger protein 692 from Rattus norvegicus (Rat).